The sequence spans 37 residues: Trypsin inhibitor 3 (37 aa).

3 cysteine pairs are disulfide-bonded: cysteine 4/cysteine 21, cysteine 11/cysteine 25, and cysteine 20/cysteine 36.

In terms of biological role, trypsin inhibitor. The sequence is that of Trypsin inhibitor 3 from Spinacia oleracea (Spinach).